The sequence spans 160 residues: Protein MGF 300-2R (160 aa).

This sequence belongs to the asfivirus MGF 300 family.

Its function is as follows. Plays a role in virus cell tropism, and may be required for efficient virus replication in macrophages. The polypeptide is Protein MGF 300-2R (Ornithodoros (relapsing fever ticks)).